A 1030-amino-acid chain; its full sequence is Halotolerance protein 9 (1030 aa).

Positions 136 to 166 form a DNA-binding region, zn(2)-C6 fungal-type; that stretch reads CDHCRKRKIRCDEVDQQTKKCSNCIKFQLPC. Residues 185 to 208 form a disordered region; it reads HHATPGESLQTSNSISNPVASSSV. Over residues 196–208 the composition is skewed to low complexity; that stretch reads SNSISNPVASSSV. Serine 221 and serine 937 each carry phosphoserine.

The protein localises to the cytoplasm. Its subcellular location is the nucleus. Putative transcription factor involved in halotolerance. In Saccharomyces cerevisiae (strain ATCC 204508 / S288c) (Baker's yeast), this protein is Halotolerance protein 9 (HAL9).